A 225-amino-acid polypeptide reads, in one-letter code: Fibroblast growth factor 11 (225 aa).

The segment at M1–R28 is disordered.

This sequence belongs to the heparin-binding growth factors family. In terms of tissue distribution, brain and eye, and in a segmental pattern of the embryonic body wall. In adult olfactory bulb, hippocampus and most concentrated in Purkinje cell layer of the cerebellum.

The protein localises to the nucleus. In terms of biological role, probably involved in nervous system development and function. In Mus musculus (Mouse), this protein is Fibroblast growth factor 11 (Fgf11).